The following is a 207-amino-acid chain: Probable GTP-binding protein EngB (207 aa).

One can recognise an EngB-type G domain in the interval 24–199 (GGYEVAFAGR…RGIVGGWLGL (176 aa)). GTP-binding positions include 32–39 (GRSNAGKS), 59–63 (GRTQQ), 77–80 (DLPG), 144–147 (TKAD), and 178–180 (YSG). Mg(2+)-binding residues include Ser-39 and Thr-61.

The protein belongs to the TRAFAC class TrmE-Era-EngA-EngB-Septin-like GTPase superfamily. EngB GTPase family. The cofactor is Mg(2+).

In terms of biological role, necessary for normal cell division and for the maintenance of normal septation. The protein is Probable GTP-binding protein EngB of Xanthomonas oryzae pv. oryzae (strain MAFF 311018).